Consider the following 620-residue polypeptide: 1-deoxy-D-xylulose-5-phosphate synthase (620 aa).

Thiamine diphosphate is bound by residues His-80 and 121–123; that span reads GHS. A Mg(2+)-binding site is contributed by Asp-152. Thiamine diphosphate contacts are provided by residues 153–154, Asn-181, Tyr-288, and Glu-370; that span reads GA. Mg(2+) is bound at residue Asn-181.

It belongs to the transketolase family. DXPS subfamily. Homodimer. Mg(2+) is required as a cofactor. Thiamine diphosphate serves as cofactor.

The catalysed reaction is D-glyceraldehyde 3-phosphate + pyruvate + H(+) = 1-deoxy-D-xylulose 5-phosphate + CO2. It participates in metabolic intermediate biosynthesis; 1-deoxy-D-xylulose 5-phosphate biosynthesis; 1-deoxy-D-xylulose 5-phosphate from D-glyceraldehyde 3-phosphate and pyruvate: step 1/1. Catalyzes the acyloin condensation reaction between C atoms 2 and 3 of pyruvate and glyceraldehyde 3-phosphate to yield 1-deoxy-D-xylulose-5-phosphate (DXP). The polypeptide is 1-deoxy-D-xylulose-5-phosphate synthase (Escherichia coli O7:K1 (strain IAI39 / ExPEC)).